The primary structure comprises 483 residues: Matrix metalloproteinase-20 (483 aa).

Residues 1-22 (MKVLPASGLAVLLVTALKFSAA) form the signal peptide. A propeptide spans 23 to 107 (APSLFAATPR…PRCGVPDVAN (85 aa)) (activation peptide). The Cysteine switch signature appears at 98 to 105 (PRCGVPDV). Residue Cys-100 participates in Zn(2+) binding. Glu-164, Ala-165, and Asp-166 together coordinate Ca(2+). Residues His-176 and Asp-178 each contribute to the Zn(2+) site. Residues Asp-183, Gly-184, Arg-186, and Thr-188 each coordinate Ca(2+). Residue His-191 coordinates Zn(2+). Residues Glu-197, Gly-198, Gly-200, and Asp-202 each contribute to the Ca(2+) site. Zn(2+) is bound at residue His-204. Ca(2+) is bound by residues Asp-206 and Glu-209. His-226 provides a ligand contact to Zn(2+). Glu-227 is an active-site residue. Zn(2+)-binding residues include His-230 and His-236. Hemopexin repeat units lie at residues 293 to 343 (PDIC…FPQL), 344 to 389 (MSNV…GFPR), 391 to 439 (VQRI…FSGV), and 440 to 483 (NGQI…WIGC). A disulfide bridge connects residues Cys-296 and Cys-483.

The protein belongs to the peptidase M10A family. Zn(2+) serves as cofactor. It depends on Ca(2+) as a cofactor. Post-translationally, autoactivates at least at the 107-Asn-|-Tyr-108 site. Expressed specifically in the enamel organ.

The protein resides in the secreted. It is found in the extracellular space. Its subcellular location is the extracellular matrix. In terms of biological role, degrades amelogenin, the major protein component of the enamel matrix and two of the macromolecules characterizing the cartilage extracellular matrix: aggrecan and the cartilage oligomeric matrix protein (COMP). May play a central role in tooth enamel formation. The polypeptide is Matrix metalloproteinase-20 (MMP20) (Sus scrofa (Pig)).